The primary structure comprises 3644 residues: Msx2-interacting protein (3644 aa).

Residues 1-574 (MVRETRHLWV…DAQAAVKETK (574 aa)) mediate DNA binding. The RRM 1 domain maps to 6–81 (RHLWVGNLPE…RDLRTDYNEP (76 aa)). At Ser99 the chain carries Phosphoserine. Disordered regions lie at residues 103–124 (EVSG…SLHA), 170–209 (YRDP…REQF), and 225–331 (TREV…EKDE). Arg108 bears the Omega-N-methylarginine mark. Residues Ser188 and Ser190 each carry the phosphoserine modification. 2 stretches are compositionally biased toward basic and acidic residues: residues 192–207 (NRFD…RARE) and 225–237 (TREV…ERSY). Low complexity predominate over residues 245–310 (PHSSQSRNQS…TASDDSPARS (66 aa)). Ser310 carries the phosphoserine modification. 3 consecutive RRM domains span residues 336–416 (FGIK…VGPE), 439–514 (RTLF…FGKS), and 518–590 (NCVW…FANR). Positions 559 to 575 (LYSEIEDAQAAVKETKG) form a coiled coil. Disordered regions lie at residues 625 to 673 (SKHE…SRRD) and 716 to 1413 (IREY…ASSF). 2 stretches are compositionally biased toward basic and acidic residues: residues 639–656 (KCRE…ERTY) and 716–745 (IREY…RPIE). Phosphoserine is present on Ser647. Phosphoserine is present on residues Ser747, Ser749, Ser758, and Ser762. Basic and acidic residues predominate over residues 765 to 783 (HSERLPSDSERRLYRRSSE). A compositionally biased stretch (low complexity) spans 784 to 794 (RSGSCSSVSPP). A Phosphoserine modification is found at Ser792. The segment covering 795–842 (RYDKLEKARLERYTKNEKADKERTFDPERVERERRIVRKEKGEKDKAE) has biased composition (basic and acidic residues). A coiled-coil region spans residues 822–850 (ERVERERRIVRKEKGEKDKAERQKRKGKA). Phosphoserine occurs at positions 852, 855, and 869. Composition is skewed to basic and acidic residues over residues 863-894 (ENDR…KNRL), 904-930 (RVKE…RDTT), 947-975 (AKSD…EGRT), and 1009-1071 (LKIE…KLER). Phosphoserine is present on residues Ser1077 and Ser1183. The segment covering 1138 to 1227 (GPEKEEVRKN…ERRSLVHEVG (90 aa)) has biased composition (basic and acidic residues). Residues 1185–1206 (RKQMEQSRRKQRMEMEIAKAEK) adopt a coiled-coil conformation. Phosphoserine occurs at positions 1209, 1237, 1267, 1276, 1283, 1293, 1298, 1302, and 1348. The segment covering 1246–1272 (DHVDFDICTKRERNYRSSRQISEDSER) has biased composition (basic and acidic residues). Positions 1283-1292 (SFHDDDDPRG) are enriched in basic and acidic residues. The segment covering 1351-1365 (EPSRWDPPMKQDPSR) has biased composition (basic and acidic residues). 2 positions are modified to phosphoserine: Ser1395 and Ser1397. Thr1454 and Thr1456 each carry phosphothreonine. 2 disordered regions span residues 1494 to 1538 (DKEK…QERQ) and 1557 to 2447 (RLQH…ARFK). A coiled-coil region spans residues 1509-1544 (YMKKKKIRTDSEGKLDDKKDERREEEQERQELFASR). 2 stretches are compositionally biased toward basic and acidic residues: residues 1516 to 1538 (RTDS…QERQ) and 1557 to 1567 (RLQHLERKSEE). The span at 1582–1591 (EGANSTSDSV) shows a compositional bias: polar residues. The span at 1601–1646 (RFMELTRMQQKEKEKDQKPKEAEKQEEPETHPKTPEPAAETKEPEP) shows a compositional bias: basic and acidic residues. A coiled-coil region spans residues 1607–1627 (RMQQKEKEKDQKPKEAEKQEE). Thr1634 carries the post-translational modification Phosphothreonine. Residues 1701-1710 (VSEPVSVPVE) show a composition bias toward low complexity. A compositionally biased stretch (polar residues) spans 1756–1765 (PGTTVSQVES). Over residues 1782–1796 (QRSEEAEEGKVEKPD) the composition is skewed to basic and acidic residues. Polar residues predominate over residues 1797–1810 (TTPSTEPDATQNAG). Thr1844 carries the post-translational modification Phosphothreonine. Composition is skewed to basic and acidic residues over residues 1857–1871 (PVTR…EKLK) and 1879–1894 (EAQK…EKIT). A phosphoserine mark is found at Ser1915 and Ser1936. Residues 1930-1943 (TDHESRSPAKEPVE) show a composition bias toward basic and acidic residues. Residue Thr1965 is modified to Phosphothreonine. Positions 1967 to 1976 (RRGRPPKTRR) are enriched in basic residues. Basic and acidic residues-rich tracts occupy residues 1977-1991 (RAEE…EPAE), 2039-2066 (GNPK…DKSG), 2074-2084 (VLERKPPEKTY), and 2097-2106 (GMDRAAHQRS). A phosphoserine mark is found at Ser2128 and Ser2134. Residues 2129–2147 (PQESESPQKGSGSSPQLAN) show a composition bias toward polar residues. Residues 2138–2462 (GSGSSPQLAN…ESDPVTPPSD (325 aa)) form an interaction with MSX2 region. Thr2171 carries the post-translational modification Phosphothreonine. Composition is skewed to low complexity over residues 2191–2212 (EPSA…ASEE) and 2231–2242 (AAAIGSIISDAS). In terms of domain architecture, RID spans 2216–2704 (EHGHKPAHQA…NVLTGPVNVL (489 aa)). Residues 2261-2274 (HPREGMEPGLHEAE) show a composition bias toward basic and acidic residues. A compositionally biased stretch (polar residues) spans 2281 to 2290 (GTATESSAPQ). Residues 2318 to 2329 (KGSKAEVTPPRK) are compositionally biased toward basic and acidic residues. The span at 2330–2345 (DKGRQKTTRRRKRNAN) shows a compositional bias: basic residues. Residues 2359 to 2379 (AEQTQSESPAAEEATAATPEA) show a composition bias toward low complexity. Phosphoserine is present on Ser2366. Phosphothreonine is present on Thr2419. 2 positions are modified to phosphoserine: Ser2450 and Ser2454. Disordered regions lie at residues 2453 to 2472 (ESDP…TIPL), 2481 to 2528 (PVIP…MDTS), 2745 to 2781 (AAKG…GAGL), and 2829 to 2849 (SQVK…PQTP). Thr2458 is modified (phosphothreonine). Ser2491 carries the post-translational modification Phosphoserine. Residues 2706 to 2845 (TPVSATVGTV…ITPTQSAPKG (140 aa)) form an interaction with RBPSUH region. Thr2913 and Thr2925 each carry phosphothreonine. The tract at residues 2974 to 3023 (NHVPSGPSTPADRTIAHLATPKPDTHSPRPTGPTPGLFPRPCHPSSTTST) is disordered. Residues 3003–3015 (PTGPTPGLFPRPC) are compositionally biased toward pro residues. An asymmetric dimethylarginine mark is found at Arg3088 and Arg3096. The tract at residues 3310–3473 (RTKTSAQVPP…QESSPHGTPQ (164 aa)) is disordered. A compositionally biased stretch (low complexity) spans 3323–3340 (PLQSTQSAQPAPSTQATQ). Over residues 3366–3379 (QVSQEAKGTQTGGV) the composition is skewed to polar residues. Ser3413 is modified (phosphoserine). An SPOC domain is found at 3478-3644 (MVQLLKKYPI…PHLMIVIASV (167 aa)).

It belongs to the RRM Spen family. As to quaternary structure, interacts with NCOR2, HDAC1, HDAC2, RBBP4, MBD3 and MTA1L1. Interacts with the nuclear receptors RAR and PPARD. Interacts with RAR in absence of ligand. Binds to the steroid receptor RNA coactivator SRA. Interacts with MSX2. Interacts with RBPSUH; this interaction may prevent the interaction between RBPSUH and NOTCH1. Binds to HIPK3. Highly expressed in testis. Expressed at lower level in brain, lung, spleen, liver and kidney. Weakly expressed in cardiac and skeletal muscles and ovary. In spleen, it is expressed in follicular B-cells, while it is weakly expressed in marginal zone B-cells.

The protein localises to the nucleus. In terms of biological role, may serve as a nuclear matrix platform that organizes and integrates transcriptional responses. In osteoblasts, supports transcription activation: synergizes with RUNX2 to enhance FGFR2-mediated activation of the osteocalcin FGF-responsive element (OCFRE). Has also been shown to be an essential corepressor protein, which probably regulates different key pathways, such as the Notch pathway. Negative regulator of the Notch pathway via its interaction with RBPSUH, which prevents the association between NOTCH1 and RBPSUH, and therefore suppresses the transactivation activity of Notch signaling. Blocks the differentiation of precursor B-cells into marginal zone B-cells. Probably represses transcription via the recruitment of large complexes containing histone deacetylase proteins. May bind both to DNA and RNA. This chain is Msx2-interacting protein (Spen), found in Mus musculus (Mouse).